Consider the following 307-residue polypeptide: GTPase Era (307 aa).

One can recognise an Era-type G domain in the interval 17 to 186 (RCGFVAIVGR…LELIKPYLPE (170 aa)). The segment at 25-32 (GRPNVGKS) is G1. Position 25–32 (25–32 (GRPNVGKS)) interacts with GTP. The G2 stretch occupies residues 51 to 55 (QTTRN). The tract at residues 72–75 (DTPG) is G3. GTP contacts are provided by residues 72–76 (DTPGF) and 133–136 (NKID). Positions 133-136 (NKID) are G4. The G5 stretch occupies residues 165-167 (VSA). Positions 217–293 (LGEELPYAMN…FLKVWVKVKS (77 aa)) constitute a KH type-2 domain.

It belongs to the TRAFAC class TrmE-Era-EngA-EngB-Septin-like GTPase superfamily. Era GTPase family. In terms of assembly, monomer.

The protein resides in the cytoplasm. It localises to the cell inner membrane. An essential GTPase that binds both GDP and GTP, with rapid nucleotide exchange. Plays a role in 16S rRNA processing and 30S ribosomal subunit biogenesis and possibly also in cell cycle regulation and energy metabolism. In Neisseria meningitidis serogroup B (strain ATCC BAA-335 / MC58), this protein is GTPase Era.